Reading from the N-terminus, the 343-residue chain is Dipeptide transport system permease protein DppC (343 aa).

The next 5 membrane-spanning stretches (helical) occupy residues 44-64, 144-164, 195-215, 259-279, and 309-329; these read LVAMWIIAITLVFSVISAFVV, LIIALAAALIDLVIGVTYGII, LALLLGQGISSIIIAIGLFAW, GVIVVQIMFDIPSMIMYEAVL, and FQLIIPAIVLSVLSLTFIFFG. The 190-residue stretch at 140 to 329 folds into the ABC transmembrane type-1 domain; sequence LRISLIIALA…VLSLTFIFFG (190 aa).

It belongs to the binding-protein-dependent transport system permease family. OppBC subfamily. In terms of assembly, the complex is composed of two ATP-binding proteins (DppD and DppF), two transmembrane proteins (DppB and DppC) and a solute-binding protein (DppA).

It localises to the cell membrane. In terms of biological role, part of the ABC transporter DppABCDF involved in dipeptide transport. Responsible for the translocation of the substrate across the membrane. The polypeptide is Dipeptide transport system permease protein DppC (Lactococcus lactis subsp. cremoris (strain MG1363)).